The chain runs to 74 residues: RNA-binding protein Hfq (74 aa).

Positions Asp9–Val69 constitute a Sm domain.

It belongs to the Hfq family. As to quaternary structure, homohexamer.

Its function is as follows. RNA chaperone that binds small regulatory RNA (sRNAs) and mRNAs to facilitate mRNA translational regulation in response to envelope stress, environmental stress and changes in metabolite concentrations. Also binds with high specificity to tRNAs. The polypeptide is RNA-binding protein Hfq (Geobacillus sp. (strain WCH70)).